The primary structure comprises 151 residues: Thymosin beta (151 aa).

4 repeat units span residues 24-29 (LKKVET), 62-67 (LHSTPV), 100-105 (LKKTET), and 134-139 (LHHVET). Positions 24 to 139 (LKKVETTEKN…DKSALHHVET (116 aa)) are 4 X 6 AA repeat of L-[KH]-[KSH]-[VT]-[EP]-[TV].

The protein belongs to the thymosin beta family. As to quaternary structure, interacts (via repeats 1, 2 and 4) with G-actin in a 1:3 ratio. Interacts (via repeats 2 and 3) with F-actin. At the comma stage, enriched in the developing nerve ring (at protein level). Ubiquitously expressed in larvae and adults with enrichment in the spermatheca, the intestinal tract and the posterior bulb of the pharynx (at protein level). Expressed in oocytes and in the gonad (at protein level).

It localises to the cytoplasm. Its subcellular location is the cell cortex. It is found in the cell junction. The protein localises to the cytoskeleton. In terms of biological role, plays an important role in the organization of the cytoskeleton by regulating actin polymerization in two ways. Firstly, by binding to and sequestering actin monomers (G actin) inhibits actin polymerization. Secondly, by binding directly filamentous actin (F actin) promotes actin polymerization. Regulates the formation of cortical actin in oocytes conferring them enough rigidity to sustain the contractions during ovulation. This Caenorhabditis elegans protein is Thymosin beta.